A 426-amino-acid polypeptide reads, in one-letter code: DNA polymerase processivity factor component OPG148 (426 aa).

This sequence belongs to the orthopoxvirus OPG148 family. As to quaternary structure, interacts with the DNA polymerase catalytic subunit OPG071. Interacts with UDG/OPG116. Component of the uracil-DNA glycosylase(UDG)-OPG148-polymerase complex; OPG148 and UDG form a heterodimeric processivity factor that associates with OPG071 to form the processive polymerase holoenzyme. Interacts with OPG117.

Its function is as follows. Plays an essential role in viral DNA replication by acting as the polymerase processivity factor together with protein OPG116. Serves as a bridge which links the DNA polymerase OPG071 and the uracil DNA glycosylase. The sequence is that of DNA polymerase processivity factor component OPG148 (OPG148) from Variola virus (isolate Human/India/Ind3/1967) (VARV).